We begin with the raw amino-acid sequence, 212 residues long: Ribonuclease HII (212 aa).

The 206-residue stretch at 1 to 206 (MICGVDEAGK…VKNLLHQKNQ (206 aa)) folds into the RNase H type-2 domain. A divalent metal cation is bound by residues aspartate 6, glutamate 7, and aspartate 101.

Belongs to the RNase HII family. It depends on Mn(2+) as a cofactor. The cofactor is Mg(2+).

It localises to the cytoplasm. The catalysed reaction is Endonucleolytic cleavage to 5'-phosphomonoester.. Functionally, endonuclease that specifically degrades the RNA of RNA-DNA hybrids. In Methanospirillum hungatei JF-1 (strain ATCC 27890 / DSM 864 / NBRC 100397 / JF-1), this protein is Ribonuclease HII.